The chain runs to 82 residues: Small ribosomal subunit protein bS16 (82 aa).

Belongs to the bacterial ribosomal protein bS16 family.

In Vibrio cholerae serotype O1 (strain ATCC 39541 / Classical Ogawa 395 / O395), this protein is Small ribosomal subunit protein bS16.